The chain runs to 548 residues: T-complex protein 1 subunit theta (548 aa).

The disordered stretch occupies residues 527–548 (QATGGPKPRGPKAQDEDDDGMA).

The protein belongs to the TCP-1 chaperonin family. As to quaternary structure, heterooligomeric complex.

The protein localises to the cytoplasm. Its function is as follows. Molecular chaperone; assists the folding of proteins upon ATP hydrolysis. Known to play a role, in vitro, in the folding of actin and tubulin. Required for correct subcellular localization of pgl-1. The sequence is that of T-complex protein 1 subunit theta (cct-8) from Caenorhabditis elegans.